We begin with the raw amino-acid sequence, 231 residues long: Ribosomal RNA large subunit methyltransferase E (231 aa).

S-adenosyl-L-methionine contacts are provided by G76, W78, D99, D115, and D139. K179 acts as the Proton acceptor in catalysis.

This sequence belongs to the class I-like SAM-binding methyltransferase superfamily. RNA methyltransferase RlmE family.

It is found in the cytoplasm. It carries out the reaction uridine(2552) in 23S rRNA + S-adenosyl-L-methionine = 2'-O-methyluridine(2552) in 23S rRNA + S-adenosyl-L-homocysteine + H(+). In terms of biological role, specifically methylates the uridine in position 2552 of 23S rRNA at the 2'-O position of the ribose in the fully assembled 50S ribosomal subunit. This chain is Ribosomal RNA large subunit methyltransferase E, found in Bradyrhizobium sp. (strain BTAi1 / ATCC BAA-1182).